Reading from the N-terminus, the 231-residue chain is Chromosome partition protein MukE (231 aa).

Residues 195-231 (MIRDGEAMPVEGSLSLKDDSDDNDRTDDTAPETGEDE) are disordered. Over residues 213-231 (DSDDNDRTDDTAPETGEDE) the composition is skewed to acidic residues.

This sequence belongs to the MukE family. In terms of assembly, interacts, and probably forms a ternary complex, with MukF and MukB. The complex formation is stimulated by calcium or magnesium.

It localises to the cytoplasm. Its subcellular location is the nucleoid. Its function is as follows. Involved in chromosome condensation, segregation and cell cycle progression. May participate in facilitating chromosome segregation by condensation DNA from both sides of a centrally located replisome during cell division. Probably acts via its interaction with MukB and MukF. The chain is Chromosome partition protein MukE from Pectobacterium atrosepticum (strain SCRI 1043 / ATCC BAA-672) (Erwinia carotovora subsp. atroseptica).